Here is a 162-residue protein sequence, read N- to C-terminus: Autophagy-related protein 8 (162 aa).

A compositionally biased stretch (basic and acidic residues) spans 1–27 (MRSKFKDEHPFEKRKAEAERIRQKYSD). Positions 1-42 (MRSKFKDEHPFEKRKAEAERIRQKYSDRIPPSPHSPASRLIG) are disordered. The Phosphatidylethanolamine amidated glycine moiety is linked to residue Gly157. The propeptide at 158–162 (GFETA) is removed in mature form.

The protein belongs to the ATG8 family.

It is found in the cytoplasmic vesicle. The protein localises to the autophagosome membrane. Its subcellular location is the vacuole membrane. Functionally, ubiquitin-like modifier involved in autophagosome formation. With ATG4, mediates the delivery of the autophagosomes to the vacuole via the microtubule cytoskeleton. Required for selective autophagic degradation of the nucleus (nucleophagy) as well as for mitophagy which contributes to regulate mitochondrial quantity and quality by eliminating the mitochondria to a basal level to fulfill cellular energy requirements and preventing excess ROS production. Also participates in membrane fusion events that take place in the early secretory pathway. Also involved in endoplasmic reticulum-specific autophagic process and is essential for the survival of cells subjected to severe ER stress. The ATG8-PE conjugate mediates tethering between adjacent membranes and stimulates membrane hemifusion, leading to expansion of the autophagosomal membrane during autophagy. This chain is Autophagy-related protein 8, found in Colletotrichum higginsianum (strain IMI 349063) (Crucifer anthracnose fungus).